The chain runs to 173 residues: ATP synthase subunit delta (173 aa).

This sequence belongs to the ATPase delta chain family. In terms of assembly, F-type ATPases have 2 components, F(1) - the catalytic core - and F(0) - the membrane proton channel. F(1) has five subunits: alpha(3), beta(3), gamma(1), delta(1), epsilon(1). F(0) has three main subunits: a(1), b(2) and c(10-14). The alpha and beta chains form an alternating ring which encloses part of the gamma chain. F(1) is attached to F(0) by a central stalk formed by the gamma and epsilon chains, while a peripheral stalk is formed by the delta and b chains.

The protein localises to the cell inner membrane. F(1)F(0) ATP synthase produces ATP from ADP in the presence of a proton or sodium gradient. F-type ATPases consist of two structural domains, F(1) containing the extramembraneous catalytic core and F(0) containing the membrane proton channel, linked together by a central stalk and a peripheral stalk. During catalysis, ATP synthesis in the catalytic domain of F(1) is coupled via a rotary mechanism of the central stalk subunits to proton translocation. Functionally, this protein is part of the stalk that links CF(0) to CF(1). It either transmits conformational changes from CF(0) to CF(1) or is implicated in proton conduction. The sequence is that of ATP synthase subunit delta from Campylobacter jejuni subsp. jejuni serotype O:6 (strain 81116 / NCTC 11828).